Reading from the N-terminus, the 356-residue chain is 5-formaminoimidazole-4-carboxamide-1-(beta)-D-ribofuranosyl 5'-monophosphate synthetase (356 aa).

Residues His27 and Ser94 each contribute to the 5-amino-1-(5-phospho-beta-D-ribosyl)imidazole-4-carboxamide site. An ATP-grasp domain is found at 116 to 333; it reads RCLAWESDRE…YSDLIEKGLS (218 aa). ATP is bound by residues 145–196 and Glu226; that span reads AELI…TRYY. Position 255 (Asn255) interacts with 5-amino-1-(5-phospho-beta-D-ribosyl)imidazole-4-carboxamide. The Mg(2+) site is built by Glu293 and Glu306.

The protein belongs to the phosphohexose mutase family. It depends on Mg(2+) as a cofactor. The cofactor is Mn(2+).

It catalyses the reaction 5-amino-1-(5-phospho-beta-D-ribosyl)imidazole-4-carboxamide + formate + ATP = 5-formamido-1-(5-phospho-D-ribosyl)imidazole-4-carboxamide + ADP + phosphate. It functions in the pathway purine metabolism; IMP biosynthesis via de novo pathway; 5-formamido-1-(5-phospho-D-ribosyl)imidazole-4-carboxamide from 5-amino-1-(5-phospho-D-ribosyl)imidazole-4-carboxamide (formate route): step 1/1. In terms of biological role, catalyzes the ATP- and formate-dependent formylation of 5-aminoimidazole-4-carboxamide-1-beta-d-ribofuranosyl 5'-monophosphate (AICAR) to 5-formaminoimidazole-4-carboxamide-1-beta-d-ribofuranosyl 5'-monophosphate (FAICAR) in the absence of folates. This Methanothrix thermoacetophila (strain DSM 6194 / JCM 14653 / NBRC 101360 / PT) (Methanosaeta thermophila) protein is 5-formaminoimidazole-4-carboxamide-1-(beta)-D-ribofuranosyl 5'-monophosphate synthetase.